The following is a 295-amino-acid chain: ATP synthase gamma chain (295 aa).

It belongs to the ATPase gamma chain family. As to quaternary structure, F-type ATPases have 2 components, CF(1) - the catalytic core - and CF(0) - the membrane proton channel. CF(1) has five subunits: alpha(3), beta(3), gamma(1), delta(1), epsilon(1). CF(0) has three main subunits: a, b and c.

It is found in the cell inner membrane. Functionally, produces ATP from ADP in the presence of a proton gradient across the membrane. The gamma chain is believed to be important in regulating ATPase activity and the flow of protons through the CF(0) complex. The polypeptide is ATP synthase gamma chain (Campylobacter curvus (strain 525.92)).